Consider the following 214-residue polypeptide: Serine protease inhibitor 2.1 (214 aa).

This sequence belongs to the serpin family.

This Rattus norvegicus (Rat) protein is Serine protease inhibitor 2.1.